Consider the following 132-residue polypeptide: Phosphomevalonate dehydratase small subunit (132 aa).

Serine 58 acts as the Proton acceptor in catalysis.

The protein belongs to the AcnX type II small subunit family. Heterodimer composed of a large subunit (PMDh-L) and a small subunit (PMDh-S).

It catalyses the reaction (R)-5-phosphomevalonate = (2E)-3-methyl-5-phosphooxypent-2-enoate + H2O. It participates in isoprenoid biosynthesis; isopentenyl diphosphate biosynthesis via mevalonate pathway. Its activity is regulated as follows. Neither the addition of 1 mM Mg(2+) nor 1 mM Mn(2+) has a significant effect on the activity, whereas Zn(2+) causes almost complete inactivation. Strongly inhibited by H(2)O(2), but not by EDTA or iodoacetamide. Functionally, component of a hydro-lyase that catalyzes the dehydration of mevalonate 5-phosphate (MVA5P) to form trans-anhydromevalonate 5-phosphate (tAHMP). Involved in the archaeal mevalonate (MVA) pathway, which provides fundamental precursors for isoprenoid biosynthesis, such as isopentenyl diphosphate (IPP) and dimethylallyl diphosphate (DMAPP). The sequence is that of Phosphomevalonate dehydratase small subunit from Aeropyrum pernix (strain ATCC 700893 / DSM 11879 / JCM 9820 / NBRC 100138 / K1).